The sequence spans 308 residues: GMP synthase [glutamine-hydrolyzing] subunit B (308 aa).

A GMPS ATP-PPase domain is found at 1 to 185 (MDWGRFVEEK…LGLPEKIYNR (185 aa)). ATP is bound at residue 28 to 34 (SGGVDSS).

Heterodimer composed of a glutamine amidotransferase subunit (A) and a GMP-binding subunit (B).

It catalyses the reaction XMP + L-glutamine + ATP + H2O = GMP + L-glutamate + AMP + diphosphate + 2 H(+). Its pathway is purine metabolism; GMP biosynthesis; GMP from XMP (L-Gln route): step 1/1. Catalyzes the synthesis of GMP from XMP. The sequence is that of GMP synthase [glutamine-hydrolyzing] subunit B (guaAB) from Pyrococcus horikoshii (strain ATCC 700860 / DSM 12428 / JCM 9974 / NBRC 100139 / OT-3).